A 380-amino-acid chain; its full sequence is Tubby-like F-box protein 9 (380 aa).

One can recognise an F-box domain in the interval Pro30–Thr76. A disordered region spans residues Ser258–Gly283. Residues Leu272–Gly283 show a composition bias toward polar residues.

It belongs to the TUB family. As to quaternary structure, part of a SCF (SKP1-cullin-F-box) protein ligase complex. Interacts with SKP1A/ASK1 and XERICO. Ubiquitous.

It participates in protein modification; protein ubiquitination. Component of SCF(ASK-cullin-F-box) E3 ubiquitin ligase complexes, which may mediate the ubiquitination and subsequent proteasomal degradation of target proteins. Confers sensitivity to ABA during seed germination and early seedling development. The polypeptide is Tubby-like F-box protein 9 (Arabidopsis thaliana (Mouse-ear cress)).